The sequence spans 184 residues: Large ribosomal subunit protein uL22 (184 aa).

The protein belongs to the universal ribosomal protein uL22 family.

The sequence is that of Large ribosomal subunit protein uL22 (RPL17) from Yarrowia lipolytica (strain CLIB 122 / E 150) (Yeast).